We begin with the raw amino-acid sequence, 689 residues long: MAREYSLLNTRNIGIMAHIDAGKTTTTERILFHTGKIHKIGETHEGASQMDWMAQEQERGITITSAATTAFWKNTRFNIIDTPGHVDFTVEVERSLRVLDGAVAVLDGQSGVEPQTETVWRQATNYRVPRIVFVNKMDKTGADFIYSVKTIGDRLGAKAAPIQLPIGAEENFTGIIDLVEMKAYEFDGKPEENYKEIEIPSNLLEQAKELRAHLVEVAVEYDEELLMKFLDGGEISISELKSAIRKGVINADFFPVLAGSAFKNKGVKLLLDAVVDYLPSPIDIPSIKGILPTGEEVERHASDTEPFSALAFKVMTDPFVGKLTFFRVYSGILTKGSYILNSTKQQKERVGRILQMHANNRTEIEEVYSGDIAAAVGLKNTTTGDTLCDEKHEIILESMVFPEPVIQLALEPKTKADQEKMSIALSKLAEEDPTFRTYTDDETGQTIIAGMGELHLDIIVDRMKREFNVATNVGAPQVSYRETIKLPGKAEGKYIKQSGGRGSYGHVVIEFEPNKDKGFEWVDKITGGRVSKEYINSARVGLENALRNGVIAGYPMIDVKATIVDGSMHEVDSNEMAYKIAASMALKEAARKMNPVVLEPIMNVEVTVPDEYYGDVMGNISSKRGMIEGSEQRGNAQTIKSKVPLTEMFGYATELRSFTQGRGNYTMIFSHYAEAPKAIADEIIKKSGK.

Residues 8-282 (LNTRNIGIMA…AVVDYLPSPI (275 aa)) form the tr-type G domain. Residues 17–24 (AHIDAGKT), 81–85 (DTPGH), and 135–138 (NKMD) each bind GTP.

Belongs to the TRAFAC class translation factor GTPase superfamily. Classic translation factor GTPase family. EF-G/EF-2 subfamily.

Its subcellular location is the cytoplasm. Catalyzes the GTP-dependent ribosomal translocation step during translation elongation. During this step, the ribosome changes from the pre-translocational (PRE) to the post-translocational (POST) state as the newly formed A-site-bound peptidyl-tRNA and P-site-bound deacylated tRNA move to the P and E sites, respectively. Catalyzes the coordinated movement of the two tRNA molecules, the mRNA and conformational changes in the ribosome. This Mycoplasma capricolum subsp. capricolum (strain California kid / ATCC 27343 / NCTC 10154) protein is Elongation factor G.